Consider the following 90-residue polypeptide: Probable Fe(2+)-trafficking protein (90 aa).

This sequence belongs to the Fe(2+)-trafficking protein family.

Its function is as follows. Could be a mediator in iron transactions between iron acquisition and iron-requiring processes, such as synthesis and/or repair of Fe-S clusters in biosynthetic enzymes. This chain is Probable Fe(2+)-trafficking protein, found in Pseudomonas syringae pv. tomato (strain ATCC BAA-871 / DC3000).